The chain runs to 146 residues: Holo-[acyl-carrier-protein] synthase (146 aa).

Residues aspartate 9 and glutamate 63 each coordinate Mg(2+).

It belongs to the P-Pant transferase superfamily. AcpS family. The cofactor is Mg(2+).

Its subcellular location is the cytoplasm. It carries out the reaction apo-[ACP] + CoA = holo-[ACP] + adenosine 3',5'-bisphosphate + H(+). Functionally, transfers the 4'-phosphopantetheine moiety from coenzyme A to a Ser of acyl-carrier-protein. The sequence is that of Holo-[acyl-carrier-protein] synthase from Burkholderia orbicola (strain MC0-3).